The chain runs to 180 residues: Kappa-casein (180 aa).

The N-terminal stretch at 1-21 (MMKHFLLVVNILAVTLPFLAA) is a signal peptide. O-linked (GalNAc...) threonine glycosylation is found at T132, T142, T147, and T153. Residue S160 is modified to Phosphoserine; alternate. O-linked (GalNAc...) serine; alternate glycosylation is present at S160.

This sequence belongs to the kappa-casein family. Mammary gland specific. Secreted in milk.

The protein resides in the secreted. Its function is as follows. Kappa-casein stabilizes micelle formation, preventing casein precipitation in milk. The sequence is that of Kappa-casein (CSN3) from Oryctolagus cuniculus (Rabbit).